Consider the following 699-residue polypeptide: tRNA(Met) cytidine acetyltransferase TmcA (699 aa).

Residues Gln179, 201–210, and Arg323 each bind ATP; that span reads GRGKSTLAGM. The region spanning 359–543 is the N-acetyltransferase domain; it reads IEIPLYEQRD…SGCYTAMALL (185 aa). Residues 471–473, Glu511, and Arg518 contribute to the acetyl-CoA site; that span reads VAV.

It belongs to the RNA cytidine acetyltransferase family. TmcA subfamily.

Its subcellular location is the cytoplasm. The enzyme catalyses cytidine(34) in elongator tRNA(Met) + acetyl-CoA + ATP + H2O = N(4)-acetylcytidine(34) in elongator tRNA(Met) + ADP + phosphate + CoA + H(+). Functionally, catalyzes the formation of N(4)-acetylcytidine (ac(4)C) at the wobble position of tRNA(Met), by using acetyl-CoA as an acetyl donor and ATP (or GTP). The sequence is that of tRNA(Met) cytidine acetyltransferase TmcA from Yersinia pestis (strain D106004).